The chain runs to 266 residues: L-cystine-binding protein TcyJ (266 aa).

The signal sequence occupies residues 1 to 29 (MKLAHLGRQALMGVMAVALVAGMSVKSFA).

Belongs to the bacterial solute-binding protein 3 family. The complex is composed of two ATP-binding proteins (TcyN), two transmembrane proteins (TcyL) and a solute-binding protein (TcyJ).

It is found in the periplasm. Functionally, part of the ABC transporter complex TcyJLN involved in L-cystine import. Binds cystine. The polypeptide is L-cystine-binding protein TcyJ (Escherichia coli O6:H1 (strain CFT073 / ATCC 700928 / UPEC)).